The following is a 259-amino-acid chain: MVLIRVLANLLILQLSYAQKSSELVIGGDECNINEHRLLAIVYTNSSQCAGTLINQEWVLTAAHCDGENMDIYLGVHNESVQYDDEEGRVAAEKFFCLSSRNYTKWDKDIMLIRLNIPVRNSTHIAPLSLPSSPPSVGSVCRVMGWGTITSPNETYPDVPHCANINLFDYEVCLAAYPEFGLPATSRTLCAGIQQGGKDTCGSDSGGSLICNGQFQGIVSWGDNPCAQPHKPALYTKVLDDTEWIQSIIAGNTAVTCPP.

Residues 1–18 form the signal peptide; that stretch reads MVLIRVLANLLILQLSYA. Residues 19 to 259 constitute a propeptide that is removed on maturation; sequence QKSSELVIGG…AGNTAVTCPP (241 aa). Residues 25–250 form the Peptidase S1 domain; it reads VIGGDECNIN…DTEWIQSIIA (226 aa). 5 disulfides stabilise this stretch: Cys-31–Cys-162, Cys-49–Cys-65, Cys-141–Cys-211, Cys-173–Cys-190, and Cys-201–Cys-226. The active-site Charge relay system is the His-64. N-linked (GlcNAc...) asparagine glycosylation is present at Asn-102. Asp-109 functions as the Charge relay system in the catalytic mechanism. Ser-205 (charge relay system) is an active-site residue.

It belongs to the peptidase S1 family. Snake venom subfamily. Monomer. In terms of tissue distribution, expressed by the venom gland.

It localises to the secreted. Functionally, thrombin-like snake venom serine protease. Displays a specificity similar to trypsin. Releases only fibrinopeptide A in the conversion of fibrinogen to fibrin. Shows coagulant, esterase and amidase activities. Reversibly increases the permeability of the blood brain barrier (BBB) in mice. Induces the barrel rotation syndrome in mice, which is manifested by gyroxin-like, rapid rolling motions. This syndrome may be due to its effect on BBB permeability, and certainly also to other actions affecting endogenous substrates present in the endothelium, nervous tissues or blood. The sequence is that of Thrombin-like enzyme gyroxin B1.7 from Crotalus durissus terrificus (South American rattlesnake).